Here is a 350-residue protein sequence, read N- to C-terminus: Histidinol-phosphate aminotransferase (350 aa).

Position 207 is an N6-(pyridoxal phosphate)lysine (lysine 207).

It belongs to the class-II pyridoxal-phosphate-dependent aminotransferase family. Histidinol-phosphate aminotransferase subfamily. As to quaternary structure, homodimer. Pyridoxal 5'-phosphate is required as a cofactor.

The enzyme catalyses L-histidinol phosphate + 2-oxoglutarate = 3-(imidazol-4-yl)-2-oxopropyl phosphate + L-glutamate. Its pathway is amino-acid biosynthesis; L-histidine biosynthesis; L-histidine from 5-phospho-alpha-D-ribose 1-diphosphate: step 7/9. This Streptococcus thermophilus (strain ATCC BAA-491 / LMD-9) protein is Histidinol-phosphate aminotransferase.